Consider the following 379-residue polypeptide: Epoxyqueuosine reductase (379 aa).

Asp-140 acts as the Proton donor in catalysis. Positions 184–214 constitute a 4Fe-4S ferredoxin-type domain; it reads FEPDTPASDLCGSCNQCVKACPTGSLLGEGK. 8 residues coordinate [4Fe-4S] cluster: Cys-194, Cys-197, Cys-200, Cys-204, Cys-220, Cys-246, Cys-249, and Cys-253. One copy of the HEAT-like PBS-type repeat lies at 307-332; it reads QRNAIIILARYKDKTAVPDLIDCLQN.

This sequence belongs to the QueG family. Monomer. Requires cob(II)alamin as cofactor. [4Fe-4S] cluster serves as cofactor.

The protein resides in the cytoplasm. It carries out the reaction epoxyqueuosine(34) in tRNA + AH2 = queuosine(34) in tRNA + A + H2O. Its pathway is tRNA modification; tRNA-queuosine biosynthesis. Catalyzes the conversion of epoxyqueuosine (oQ) to queuosine (Q), which is a hypermodified base found in the wobble positions of tRNA(Asp), tRNA(Asn), tRNA(His) and tRNA(Tyr). The sequence is that of Epoxyqueuosine reductase from Listeria monocytogenes serovar 1/2a (strain ATCC BAA-679 / EGD-e).